Here is a 245-residue protein sequence, read N- to C-terminus: tRNA pseudouridine synthase A (245 aa).

Aspartate 52 acts as the Nucleophile in catalysis. Tyrosine 111 is a binding site for substrate.

This sequence belongs to the tRNA pseudouridine synthase TruA family. In terms of assembly, homodimer.

It carries out the reaction uridine(38/39/40) in tRNA = pseudouridine(38/39/40) in tRNA. In terms of biological role, formation of pseudouridine at positions 38, 39 and 40 in the anticodon stem and loop of transfer RNAs. This is tRNA pseudouridine synthase A from Thermotoga sp. (strain RQ2).